Here is a 377-residue protein sequence, read N- to C-terminus: Probable protein phosphatase 2C 7 (377 aa).

2 disordered regions span residues 1–68 (MAAH…GKAA) and 80–99 (TTVA…EDDE). Low complexity predominate over residues 21 to 39 (PPAAEAEAAAAAAAIARAA). The segment covering 51-63 (GVRHPLKHRRFRA) has biased composition (basic residues). Over residues 80–89 (TTVAEATATG) the composition is skewed to low complexity. Positions 115 to 361 (SCGYSSFRGR…DNITCIVVKF (247 aa)) constitute a PPM-type phosphatase domain. Positions 151, 152, 313, and 352 each coordinate Mn(2+).

Belongs to the PP2C family. Mg(2+) serves as cofactor. Mn(2+) is required as a cofactor.

It catalyses the reaction O-phospho-L-seryl-[protein] + H2O = L-seryl-[protein] + phosphate. It carries out the reaction O-phospho-L-threonyl-[protein] + H2O = L-threonyl-[protein] + phosphate. The protein is Probable protein phosphatase 2C 7 of Oryza sativa subsp. japonica (Rice).